Here is a 750-residue protein sequence, read N- to C-terminus: Photosystem I P700 chlorophyll a apoprotein A1 (750 aa).

Helical transmembrane passes span 70–93, 156–179, 195–219, 291–309, 346–369, 385–411, 433–455, and 531–549; these read VFSA…FHGA, LYCT…FHYH, LNHH…HVSL, IAHH…GHMY, WHAQ…HHMY, LSLF…IFMV, AIIS…LYIH, and FLVH…LILL. 2 residues coordinate [4Fe-4S] cluster: C573 and C582. 2 helical membrane-spanning segments follow: residues 589-610 and 664-686; these read HVFL…HFSW and LSAY…MFLF. A chlorophyll a'-binding site is contributed by H675. Chlorophyll a is bound by residues M683 and Y691. Residue W692 participates in phylloquinone binding. A helical membrane pass occupies residues 724 to 744; it reads AVGVTHYLLGGIATTWAFFLA.

This sequence belongs to the PsaA/PsaB family. As to quaternary structure, the PsaA/B heterodimer binds the P700 chlorophyll special pair and subsequent electron acceptors. PSI consists of a core antenna complex that captures photons, and an electron transfer chain that converts photonic excitation into a charge separation. The eukaryotic PSI reaction center is composed of at least 11 subunits. P700 is a chlorophyll a/chlorophyll a' dimer, A0 is one or more chlorophyll a, A1 is one or both phylloquinones and FX is a shared 4Fe-4S iron-sulfur center. serves as cofactor.

Its subcellular location is the plastid. The protein resides in the chloroplast thylakoid membrane. It carries out the reaction reduced [plastocyanin] + hnu + oxidized [2Fe-2S]-[ferredoxin] = oxidized [plastocyanin] + reduced [2Fe-2S]-[ferredoxin]. Functionally, psaA and PsaB bind P700, the primary electron donor of photosystem I (PSI), as well as the electron acceptors A0, A1 and FX. PSI is a plastocyanin-ferredoxin oxidoreductase, converting photonic excitation into a charge separation, which transfers an electron from the donor P700 chlorophyll pair to the spectroscopically characterized acceptors A0, A1, FX, FA and FB in turn. Oxidized P700 is reduced on the lumenal side of the thylakoid membrane by plastocyanin. This is Photosystem I P700 chlorophyll a apoprotein A1 from Phalaenopsis aphrodite subsp. formosana (Moth orchid).